Here is a 654-residue protein sequence, read N- to C-terminus: MGRIPTRELSSYLLTGRVFSRDCTRLQRLPARNISKQHFAVGQPAQRRWNHTAPEAGHTTTTQPPPGQPAPHLRKILKDQAKASKAQAKGKKKRSSADNQTVPGWELTVGIEIHAQLNTDRKLFSPAPLASTEDNTRAPAPNSLVAPFDLAIPGTQPLFQQATLVPAIRAAVALNCAVQPVSSFDRKHYFHWDQPSGYQITQYYAPLARDGYVDLRARDGIAAQDVGGGEPLRIRVKQVQMEQDTAKTLARPDGVHWLDFNRCGAPLVEIISEPDIHHPATAAAFVRKVQMLLGAADACVVGMEKGGLRADVNVSVRRVEDGKTSSAKLGQRTEIKNLFSFKAVEDAIIAERDRQIKLLDEGGVVLGETRGWSLGSTETRRLRGKEGEVDYRYMPDPDLGPVLVGQDVVEHLKSTMGVMPDQELDDLVSSYGLSEKDAMSLMLLEDGGRLQFYYKTVDALEQRLQNQGDSTKVTAESLVQARILTGNWILHVLGSLTSENNQRDRAAAGLSERDLGVTSEGDAFISADDLADILFFLHTSRIRQGTAKDLLFAMFNEVMPAQYISTPAGIERYITDNDLWFSELSPQEYSELAESVLDEEEHVLKEFMGARYPQGKLMFLVGMMMKSGARERIDPATAQKVMRDVVETRVAAMK.

Residues 1-8 (MGRIPTRE) constitute a mitochondrion transit peptide. Residues 79 to 101 (DQAKASKAQAKGKKKRSSADNQT) are disordered.

Belongs to the GatB/GatE family. GatB subfamily. As to quaternary structure, subunit of the heterotrimeric GatCAB amidotransferase (AdT) complex, composed of A, B and C subunits.

The protein resides in the mitochondrion. It catalyses the reaction L-glutamyl-tRNA(Gln) + L-glutamine + ATP + H2O = L-glutaminyl-tRNA(Gln) + L-glutamate + ADP + phosphate + H(+). Functionally, allows the formation of correctly charged Gln-tRNA(Gln) through the transamidation of misacylated Glu-tRNA(Gln) in the mitochondria. The reaction takes place in the presence of glutamine and ATP through an activated gamma-phospho-Glu-tRNA(Gln). In Pyricularia oryzae (strain 70-15 / ATCC MYA-4617 / FGSC 8958) (Rice blast fungus), this protein is Glutamyl-tRNA(Gln) amidotransferase subunit B, mitochondrial.